A 328-amino-acid polypeptide reads, in one-letter code: dTDP-glucose 4,6-dehydratase (328 aa).

NAD(+)-binding positions include 13–14, 37–40, 63–64, 82–86, and Thr101; these read FI, DALT, DI, and LAAES. Ser86 is a substrate binding site. Thr126 lines the substrate pocket. Asp127 acts as the Proton donor in catalysis. Catalysis depends on proton acceptor residues Glu128 and Tyr150. 150-154 lines the NAD(+) pocket; the sequence is YSASK. Asn179 provides a ligand contact to substrate. Asn180 is an NAD(+) binding site. Residues 189-190, 205-207, Arg214, Asn249, and 272-276 contribute to the substrate site; these read KL, PLY, and DRKGH.

The protein belongs to the NAD(P)-dependent epimerase/dehydratase family. dTDP-glucose dehydratase subfamily. In terms of assembly, homodimer. NAD(+) is required as a cofactor.

The enzyme catalyses dTDP-alpha-D-glucose = dTDP-4-dehydro-6-deoxy-alpha-D-glucose + H2O. It functions in the pathway antibiotic biosynthesis; streptomycin biosynthesis. Functionally, involved in the biosynthesis of the streptose moiety of streptomycin. Catalyzes the dehydration of dTDP-D-glucose to form dTDP-6-deoxy-D-xylo-4-hexulose via a three-step process involving oxidation, dehydration and reduction. The polypeptide is dTDP-glucose 4,6-dehydratase (Streptomyces griseus).